A 901-amino-acid polypeptide reads, in one-letter code: DNA mismatch repair protein MutS (901 aa).

Residues 1–12 are compositionally biased toward polar residues; that stretch reads MKYSASTSTPKS. The disordered stretch occupies residues 1–25; it reads MKYSASTSTPKSAQPKEEELENSLP. 679–686 contacts ATP; sequence GPNASGKS.

Belongs to the DNA mismatch repair MutS family.

This protein is involved in the repair of mismatches in DNA. It is possible that it carries out the mismatch recognition step. This protein has a weak ATPase activity. This chain is DNA mismatch repair protein MutS, found in Trichodesmium erythraeum (strain IMS101).